The following is a 553-amino-acid chain: Glucose-6-phosphate isomerase (553 aa).

E355 functions as the Proton donor in the catalytic mechanism. Residues H386 and K513 contribute to the active site.

It belongs to the GPI family.

It localises to the cytoplasm. The enzyme catalyses alpha-D-glucose 6-phosphate = beta-D-fructose 6-phosphate. It functions in the pathway carbohydrate biosynthesis; gluconeogenesis. The protein operates within carbohydrate degradation; glycolysis; D-glyceraldehyde 3-phosphate and glycerone phosphate from D-glucose: step 2/4. In terms of biological role, catalyzes the reversible isomerization of glucose-6-phosphate to fructose-6-phosphate. The polypeptide is Glucose-6-phosphate isomerase (Baumannia cicadellinicola subsp. Homalodisca coagulata).